Here is a 396-residue protein sequence, read N- to C-terminus: MAKEKFDRSKTHANIGTIGHVDHGKTTLTAAITTVLAKRSGKGQAMAYDAIDGAPEERERGITISTAHVEYETDSRHYAHVDCPGHADYVKNMITGAAQMDGGILVVSAADGPMPQTREHILLSRNVGVPYLVVFLNKCDMVDDEELLELVEMEVRDLLSEYDFPGDDVPVIQGSALKALQGEAEWEEKIIELMNAVDEYIPTPERDKDKPFMMPVEDVFSITGRGTVATGRVERGQLNVGDTVEILGINEEKKSTTVTGVEMFRKLLDYAEAGDNIGALLRGVSREEIQRGQVLAKPGTITPHTKFTAEVYVLSKDEGGRHTPFFSNYRPQFYFRTTDVTGVVHLPEGTEMVMPGDNTEMTVELIAPIAIEEGTRFSIREGGRTVGSGVVSTITE.

Residues 10–205 (KTHANIGTIG…AVDEYIPTPE (196 aa)) form the tr-type G domain. Residues 19–26 (GHVDHGKT) are G1. 19–26 (GHVDHGKT) is a GTP binding site. Residue T26 coordinates Mg(2+). The interval 61 to 65 (GITIS) is G2. The tract at residues 82–85 (DCPG) is G3. Residues 82–86 (DCPGH) and 137–140 (NKCD) contribute to the GTP site. The segment at 137-140 (NKCD) is G4. Residues 175-177 (SAL) form a G5 region.

The protein belongs to the TRAFAC class translation factor GTPase superfamily. Classic translation factor GTPase family. EF-Tu/EF-1A subfamily. As to quaternary structure, monomer.

The protein resides in the cytoplasm. The enzyme catalyses GTP + H2O = GDP + phosphate + H(+). In terms of biological role, GTP hydrolase that promotes the GTP-dependent binding of aminoacyl-tRNA to the A-site of ribosomes during protein biosynthesis. The polypeptide is Elongation factor Tu (Shouchella clausii (strain KSM-K16) (Alkalihalobacillus clausii)).